A 73-amino-acid polypeptide reads, in one-letter code: MGSFSIWHWVIVLVVVVLIFGTKKLRNVGQDLGGAVKGFKEGMKSEGEDAAQTPPAAQKEGGRVIDAEPADKK.

The chain crosses the membrane as a helical span at residues 1 to 21; it reads MGSFSIWHWVIVLVVVVLIFG. The disordered stretch occupies residues 43 to 73; that stretch reads MKSEGEDAAQTPPAAQKEGGRVIDAEPADKK. The segment covering 60 to 73 has biased composition (basic and acidic residues); sequence EGGRVIDAEPADKK.

It belongs to the TatA/E family. In terms of assembly, the Tat system comprises two distinct complexes: a TatABC complex, containing multiple copies of TatA, TatB and TatC subunits, and a separate TatA complex, containing only TatA subunits. Substrates initially bind to the TatABC complex, which probably triggers association of the separate TatA complex to form the active translocon.

The protein resides in the cell inner membrane. Functionally, part of the twin-arginine translocation (Tat) system that transports large folded proteins containing a characteristic twin-arginine motif in their signal peptide across membranes. TatA could form the protein-conducting channel of the Tat system. This is Sec-independent protein translocase protein TatA from Laribacter hongkongensis (strain HLHK9).